The primary structure comprises 77 residues: Defensin-B6 (77 aa).

The first 20 residues, 1–20, serve as a signal peptide directing secretion; it reads MKTLFFLSVFIFLLLHLSPG. Cystine bridges form between C43–C70, C50–C64, and C54–C71.

It belongs to the beta-defensin family. In terms of tissue distribution, lowly expressed in spleen, kidney and lung.

It localises to the secreted. Has antimicrobial activity. The protein is Defensin-B6 of Ornithorhynchus anatinus (Duckbill platypus).